A 288-amino-acid polypeptide reads, in one-letter code: 33 kDa chaperonin (288 aa).

Intrachain disulfides connect cysteine 225–cysteine 227 and cysteine 258–cysteine 261.

The protein belongs to the HSP33 family. In terms of processing, under oxidizing conditions two disulfide bonds are formed involving the reactive cysteines. Under reducing conditions zinc is bound to the reactive cysteines and the protein is inactive.

The protein resides in the cytoplasm. Functionally, redox regulated molecular chaperone. Protects both thermally unfolding and oxidatively damaged proteins from irreversible aggregation. Plays an important role in the bacterial defense system toward oxidative stress. The protein is 33 kDa chaperonin of Shewanella denitrificans (strain OS217 / ATCC BAA-1090 / DSM 15013).